Here is a 99-residue protein sequence, read N- to C-terminus: Probable small ribosomal subunit protein cS23 (99 aa).

It belongs to the chloroplast-specific ribosomal protein cS23 family. Part of the 30S ribosomal subunit.

Functionally, probably a ribosomal protein or a ribosome-associated protein. In Synechococcus sp. (strain JA-2-3B'a(2-13)) (Cyanobacteria bacterium Yellowstone B-Prime), this protein is Probable small ribosomal subunit protein cS23.